A 374-amino-acid chain; its full sequence is Eukaryotic translation initiation factor 3 subunit M (374 aa).

Positions 180-339 (TAAKVMVELL…RKVVVSHSTH (160 aa)) constitute a PCI domain.

The protein belongs to the eIF-3 subunit M family. As to quaternary structure, component of the eukaryotic translation initiation factor 3 (eIF-3) complex, which is composed of 13 subunits: EIF3A, EIF3B, EIF3C, EIF3D, EIF3E, EIF3F, EIF3G, EIF3H, EIF3I, EIF3J, EIF3K, EIF3L and EIF3M.

It is found in the cytoplasm. Functionally, component of the eukaryotic translation initiation factor 3 (eIF-3) complex, which is involved in protein synthesis of a specialized repertoire of mRNAs and, together with other initiation factors, stimulates binding of mRNA and methionyl-tRNAi to the 40S ribosome. The eIF-3 complex specifically targets and initiates translation of a subset of mRNAs involved in cell proliferation. In Gallus gallus (Chicken), this protein is Eukaryotic translation initiation factor 3 subunit M.